Consider the following 540-residue polypeptide: MRAMVVDMNDKYAVVVNKEGQYIKIKRKAEHRLGYQVELPDRVIGFERRTLLKVVSVAAALLIVSSISFAVYSYNLPYSYVNVDINPSLEIILNMYNRIIDVKALNSEGEMLIEDSYKNSRLDEGVEKIIDSAVAQGFLKNDEENTIMLTVAGKNSRKVLEIKEEVESTANKVLNDDNVVSEVIVENIVLERREEARELGIAPGKLLLIEKLKEVDPKATTEEYKDKPVNEIVKTIRDIKKVPNENNRKDDDKKVNNEPNKPLPDRKADVETSAGVKENTAGPDAGIKPVNKTDNAKPNVGTDINNKENKTVSNAKIDSGIDKGNKDSKPNSNTKINNDVKKDNKDNKTNSDAKTFNDVSKDNKNDKADGNAKINNNINRDNKITPINPDNKFSSGGSKDDKDNKHVDSKDKMNNEDNKNINNGSCPQYNPYWNPYWNPYWNPYWGNPKEKEDMTKQNDEWFKKMQEEQKKQYDEWLKKMQEEQKKQHDEWVKKMEEMKNTEKMKNPYQENKIEKPKEAEKENKPDRPPEPGKEILKKRC.

A RsgI N-terminal anti-sigma domain is found at 1–48; that stretch reads MRAMVVDMNDKYAVVVNKEGQYIKIKRKAEHRLGYQVELPDRVIGFER. Over 1–50 the chain is Cytoplasmic; it reads MRAMVVDMNDKYAVVVNKEGQYIKIKRKAEHRLGYQVELPDRVIGFERRT. A helical membrane pass occupies residues 51–73; that stretch reads LLKVVSVAAALLIVSSISFAVYS. At 74–540 the chain is on the extracellular side; it reads YNLPYSYVNV…PGKEILKKRC (467 aa). Composition is skewed to basic and acidic residues over residues 238–256, 319–329, 338–351, 359–370, and 398–419; these read DIKK…KKVN, SGIDKGNKDSK, NDVK…KTNS, VSKDNKNDKADG, and SKDD…EDNK. 2 disordered regions span residues 238–429 and 481–540; these read DIKK…CPQY and QEEQ…KKRC. Positions 451–501 form a coiled coil; the sequence is KEDMTKQNDEWFKKMQEEQKKQYDEWLKKMQEEQKKQHDEWVKKMEEMKNT.

As to quaternary structure, interacts (via RsgI N-terminal anti-sigma domain) with SigI7.

The protein resides in the cell membrane. Functionally, anti-sigma factor for SigI7. Negatively regulates SigI7 activity through direct interaction. The chain is Anti-sigma-I factor RsgI7 from Acetivibrio thermocellus (strain ATCC 27405 / DSM 1237 / JCM 9322 / NBRC 103400 / NCIMB 10682 / NRRL B-4536 / VPI 7372) (Clostridium thermocellum).